The sequence spans 517 residues: Probable bifunctional methylthioribulose-1-phosphate dehydratase/enolase-phosphatase E1 (517 aa).

Positions 1–242 (MACSGCSCEA…CIKLYQLGID (242 aa)) are methylthioribulose-1-phosphate dehydratase. C114 is a binding site for substrate. Zn(2+) contacts are provided by H132 and H134. Catalysis depends on E157, which acts as the Proton donor/acceptor; for methylthioribulose-1-phosphate dehydratase activity. Position 207 (H207) interacts with Zn(2+). Residues 278 to 517 (VVLDIEGTTT…FRTIKSFSEI (240 aa)) are enolase-phosphatase E1. Mg(2+) is bound by residues D281 and E283. Substrate-binding positions include 416-417 (SS) and K450. D476 is a Mg(2+) binding site.

The protein in the N-terminal section; belongs to the aldolase class II family. MtnB subfamily. This sequence in the C-terminal section; belongs to the HAD-like hydrolase superfamily. MasA/MtnC family. Zn(2+) is required as a cofactor. Mg(2+) serves as cofactor.

The catalysed reaction is 5-(methylsulfanyl)-D-ribulose 1-phosphate = 5-methylsulfanyl-2,3-dioxopentyl phosphate + H2O. It catalyses the reaction 5-methylsulfanyl-2,3-dioxopentyl phosphate + H2O = 1,2-dihydroxy-5-(methylsulfanyl)pent-1-en-3-one + phosphate. It functions in the pathway amino-acid biosynthesis; L-methionine biosynthesis via salvage pathway; L-methionine from S-methyl-5-thio-alpha-D-ribose 1-phosphate: step 2/6. The protein operates within amino-acid biosynthesis; L-methionine biosynthesis via salvage pathway; L-methionine from S-methyl-5-thio-alpha-D-ribose 1-phosphate: step 3/6. Its pathway is amino-acid biosynthesis; L-methionine biosynthesis via salvage pathway; L-methionine from S-methyl-5-thio-alpha-D-ribose 1-phosphate: step 4/6. This chain is Probable bifunctional methylthioribulose-1-phosphate dehydratase/enolase-phosphatase E1, found in Zea mays (Maize).